Consider the following 88-residue polypeptide: Large ribosomal subunit protein bL31B (88 aa).

The protein belongs to the bacterial ribosomal protein bL31 family. Type B subfamily. Part of the 50S ribosomal subunit.

In Glaesserella parasuis serovar 5 (strain SH0165) (Haemophilus parasuis), this protein is Large ribosomal subunit protein bL31B.